We begin with the raw amino-acid sequence, 133 residues long: NAD(P)H-quinone oxidoreductase subunit 3 (133 aa).

3 helical membrane passes run 22 to 44, 77 to 97, and 102 to 122; these read YLLGFLLISSLVPILSLTASRLL, MFALVFVIFDVETVFLYPWAV, and LGLLAFVEALIFITILVVGLA.

The protein belongs to the complex I subunit 3 family. As to quaternary structure, NDH-1 can be composed of about 15 different subunits; different subcomplexes with different compositions have been identified which probably have different functions.

It is found in the cellular thylakoid membrane. It carries out the reaction a plastoquinone + NADH + (n+1) H(+)(in) = a plastoquinol + NAD(+) + n H(+)(out). It catalyses the reaction a plastoquinone + NADPH + (n+1) H(+)(in) = a plastoquinol + NADP(+) + n H(+)(out). Functionally, NDH-1 shuttles electrons from an unknown electron donor, via FMN and iron-sulfur (Fe-S) centers, to quinones in the respiratory and/or the photosynthetic chain. The immediate electron acceptor for the enzyme in this species is believed to be plastoquinone. Couples the redox reaction to proton translocation, and thus conserves the redox energy in a proton gradient. Cyanobacterial NDH-1 also plays a role in inorganic carbon-concentration. This is NAD(P)H-quinone oxidoreductase subunit 3 from Synechococcus sp. (strain ATCC 27144 / PCC 6301 / SAUG 1402/1) (Anacystis nidulans).